The primary structure comprises 253 residues: Exosome complex component Rrp4 (253 aa).

The S1 motif domain maps to 80 to 153; the sequence is GDIVIGIVVD…SRGPILTVQD (74 aa).

Belongs to the RRP4 family. As to quaternary structure, component of the archaeal exosome complex. Forms a trimer of Rrp4 and/or Csl4 subunits. The trimer associates with a hexameric ring-like arrangement composed of 3 Rrp41-Rrp42 heterodimers.

It localises to the cytoplasm. In terms of biological role, non-catalytic component of the exosome, which is a complex involved in RNA degradation. Increases the RNA binding and the efficiency of RNA degradation. Confers strong poly(A) specificity to the exosome. This chain is Exosome complex component Rrp4, found in Ignisphaera aggregans (strain DSM 17230 / JCM 13409 / AQ1.S1).